A 104-amino-acid polypeptide reads, in one-letter code: uncharacterized protein (104 aa).

The tract at residues 55-104 is disordered; the sequence is RPFSSDRINRPFSPDKKGEPIFPDKRDRPFSPDRINRPFSPDKKGEPIFP.

Its subcellular location is the plastid. This is an uncharacterized protein from Euglena longa (Euglenophycean alga).